The sequence spans 170 residues: ATP synthase subunit b (170 aa).

The chain crosses the membrane as a helical span at residues 11 to 31 (AFTFGDAFFTLFAFAILLVLI).

The protein belongs to the ATPase B chain family. As to quaternary structure, F-type ATPases have 2 components, F(1) - the catalytic core - and F(0) - the membrane proton channel. F(1) has five subunits: alpha(3), beta(3), gamma(1), delta(1), epsilon(1). F(0) has three main subunits: a(1), b(2) and c(10-14). The alpha and beta chains form an alternating ring which encloses part of the gamma chain. F(1) is attached to F(0) by a central stalk formed by the gamma and epsilon chains, while a peripheral stalk is formed by the delta and b chains.

It is found in the cell membrane. Its function is as follows. F(1)F(0) ATP synthase produces ATP from ADP in the presence of a proton or sodium gradient. F-type ATPases consist of two structural domains, F(1) containing the extramembraneous catalytic core and F(0) containing the membrane proton channel, linked together by a central stalk and a peripheral stalk. During catalysis, ATP synthesis in the catalytic domain of F(1) is coupled via a rotary mechanism of the central stalk subunits to proton translocation. In terms of biological role, component of the F(0) channel, it forms part of the peripheral stalk, linking F(1) to F(0). This chain is ATP synthase subunit b, found in Listeria welshimeri serovar 6b (strain ATCC 35897 / DSM 20650 / CCUG 15529 / CIP 8149 / NCTC 11857 / SLCC 5334 / V8).